Reading from the N-terminus, the 1404-residue chain is MNQELTNNPFNPLTPPKAFDEIKVSLASPERILSWSYGEIKKPETINYRTFKPERDGLFCARIFGPIKDYECLCGKYKRMKYRGVVCEKCGVEVTLQKVRRERMGHIELAAPVAHIWFLKSLPSRIGLMLDMTLRDLERILYFENYVVIEPGLTDLTYGQLMGEEEFMDAQDAYGADAFQANIGAEAIREMLSQIDLESEANQLREDLKEATGELKPKKIIKRLKIVESFLESGNRPEWMVMTVVPVIPPELRPLVPLDGGRFATSDLNDLYRRVINRNNRLKRLIELRAPDIIIRNEKRMLQESVDALFDNGRRGRVITGANKRPLKSLSDMLKGKQGRFRQNLLGKRVDFSGRSVIVTGPELKLHQCGLPKKMALELFKPFIYSRLEAKGLSSTVKQAKKLVEKERPEVWDILDEVIREHPVLLNRAPTLHRLGIQAFEPVLIEGKAIQLHPLVCSAFNADFDGDQMAVHVPLSLEAQLEARVLMMSTNNVLSPANGAPIIVPSQDMILGLYYVTLAREGMKGEGMIFADVDEVRHALDAGEIHLHSKITARLPQIDEEGNEIMVRFDTTPGRVMLGALLPLNAKAPFDLVNRLLRKKEVQQVIDTVYRYCGQKESVIFCDQIMSMGFKEAFKAGISFGKDDMVIPDTKWTLVEDARDQVEEFEQQYMDGLITQGEKYNKVIDAWSKVNDKVTDAMMGTISASKRDENDAEMEPNSVYMMAHSGARGSVTQMKQLGGMRGLMAKPNGEIIETPIISNFKEGLTVLEYFNSTHGARKGLSDTALKTANSGYLTRRLVDVAQDCIVRMDDCGTENTIKAEAAVNDGEVVASLAERILGRTAGEDVFIPGTDEIIVAKGELIDERKADAVEAAGVTTMQMRSPLTCEAEEGVCATCYGRDLARGTKVNTGEAVGIIAAQSIGEPGTQLTMRTFHIGGVAQGGQQSFQEVNVDGKVEFRNANLLKNANGESVVMGRNMVLAIMDDQGSERASFKLGYGTNVLVEDGKKVVRGDRLFEWDPYTLPIIAEAAGTAKFVDLVSGISIRDETDDATGMTQKIVSDWRTAPKGNELKPEIIIAGEDGEPMRNDQGNPVTYTMSVDAILSIEEGQTVKAGDVIARIPREGAKTKDITGGLPRVAELFEARRPKDHAIIAEIDGYVKFGRDFKNKRRIGIVPADESLEPVEYMVPKGKHIPVAEGDFVQVGDYIMDGNPAPHDILAVLGVEALADYMIDEVQDVYRLQGVKINDKHIEVIVRQMLQKWEIQDSGETTLLKGEHVDKAEFDSANAKAVRDGRRPAQGEPILLGITKASLQTRSFISAASFQETTRVLTEASVQGKKDRLVGLKENVIVGRLIPAGTGGATQDVERIAKGRDQVVIDAAQAEAEAAAALAAPVMEDAAPDTDAAE.

Zn(2+) contacts are provided by cysteine 72, cysteine 74, cysteine 87, and cysteine 90. Mg(2+) is bound by residues aspartate 463, aspartate 465, and aspartate 467. Zn(2+)-binding residues include cysteine 811, cysteine 885, cysteine 892, and cysteine 895.

It belongs to the RNA polymerase beta' chain family. The RNAP catalytic core consists of 2 alpha, 1 beta, 1 beta' and 1 omega subunit. When a sigma factor is associated with the core the holoenzyme is formed, which can initiate transcription. Mg(2+) serves as cofactor. Zn(2+) is required as a cofactor.

It carries out the reaction RNA(n) + a ribonucleoside 5'-triphosphate = RNA(n+1) + diphosphate. Its function is as follows. DNA-dependent RNA polymerase catalyzes the transcription of DNA into RNA using the four ribonucleoside triphosphates as substrates. This chain is DNA-directed RNA polymerase subunit beta', found in Jannaschia sp. (strain CCS1).